We begin with the raw amino-acid sequence, 381 residues long: Homoserine O-succinyltransferase (381 aa).

The AB hydrolase-1 domain occupies 45–360 (NAVLVCHALN…PHGHDAFLLD (316 aa)). Catalysis depends on serine 151, which acts as the Nucleophile. Arginine 221 contributes to the substrate binding site. Active-site residues include aspartate 321 and histidine 354. Aspartate 355 is a substrate binding site.

The protein belongs to the AB hydrolase superfamily. MetX family. Homodimer.

It localises to the cytoplasm. It carries out the reaction L-homoserine + succinyl-CoA = O-succinyl-L-homoserine + CoA. It participates in amino-acid biosynthesis; L-methionine biosynthesis via de novo pathway; O-succinyl-L-homoserine from L-homoserine: step 1/1. Transfers a succinyl group from succinyl-CoA to L-homoserine, forming succinyl-L-homoserine. This is Homoserine O-succinyltransferase from Burkholderia ambifaria (strain ATCC BAA-244 / DSM 16087 / CCUG 44356 / LMG 19182 / AMMD) (Burkholderia cepacia (strain AMMD)).